The sequence spans 153 residues: Actin-related protein 2/3 complex subunit 5-like protein (153 aa).

Serine 64 is subject to Phosphoserine.

Belongs to the ARPC5 family. As to quaternary structure, may be a component of the Arp2/3 complex in which it may replace ARPC5.

It localises to the cytoplasm. It is found in the cytoskeleton. May function as component of the Arp2/3 complex which is involved in regulation of actin polymerization and together with an activating nucleation-promoting factor (NPF) mediates the formation of branched actin networks. The sequence is that of Actin-related protein 2/3 complex subunit 5-like protein (Arpc5l) from Rattus norvegicus (Rat).